A 360-amino-acid polypeptide reads, in one-letter code: MLLLLAEYLQQFYKGFGVFQYLTLRGILSVLTALSLSLWLGPWMIRTLQIRQIGQAVRNDGPQSHLSKKGTPTMGGALILTAIAISTLLWADLSNRYVWVVLVVTLLFGAIGWVDDYRKVIEKNSRGLPSRWKYFWQSVFGIGAAVFLYMTAETPIETTLIVPMLKSVEIQLGIFFVVLTYFVIVGSSNAVNLTDGLDGLAIMPTVMVAGALGIFCYLSGNVKFAEYLLIPNVPGAGELIVFCAALVGAGLGFLWFNTYPAQVFMGDVGALALGAALGTIAVIVRQEIVLFIMGGVFVMETLSVMIQVASFKLTGRRVFRMAPIHHHFELKGWPEPRVIVRFWIITVILVLIGLATLKLR.

10 helical membrane passes run 25–45 (RGILSVLTALSLSLWLGPWMI), 73–93 (TMGGALILTAIAISTLLWADL), 97–117 (YVWVVLVVTLLFGAIGWVDDY), 142–162 (IGAAVFLYMTAETPIETTLIV), 167–187 (SVEIQLGIFFVVLTYFVIVGS), 199–219 (GLAIMPTVMVAGALGIFCYLS), 236–256 (AGELIVFCAALVGAGLGFLWF), 263–283 (VFMGDVGALALGAALGTIAVI), 288–308 (IVLFIMGGVFVMETLSVMIQV), and 338–358 (VIVRFWIITVILVLIGLATLK).

This sequence belongs to the glycosyltransferase 4 family. MraY subfamily. The cofactor is Mg(2+).

Its subcellular location is the cell inner membrane. It carries out the reaction UDP-N-acetyl-alpha-D-muramoyl-L-alanyl-gamma-D-glutamyl-meso-2,6-diaminopimeloyl-D-alanyl-D-alanine + di-trans,octa-cis-undecaprenyl phosphate = di-trans,octa-cis-undecaprenyl diphospho-N-acetyl-alpha-D-muramoyl-L-alanyl-D-glutamyl-meso-2,6-diaminopimeloyl-D-alanyl-D-alanine + UMP. The protein operates within cell wall biogenesis; peptidoglycan biosynthesis. Functionally, catalyzes the initial step of the lipid cycle reactions in the biosynthesis of the cell wall peptidoglycan: transfers peptidoglycan precursor phospho-MurNAc-pentapeptide from UDP-MurNAc-pentapeptide onto the lipid carrier undecaprenyl phosphate, yielding undecaprenyl-pyrophosphoryl-MurNAc-pentapeptide, known as lipid I. This is Phospho-N-acetylmuramoyl-pentapeptide-transferase from Pseudomonas aeruginosa (strain LESB58).